The chain runs to 297 residues: MIPLSIRVPASTANVGPGFDSVGIALSLYLHVVVKEKSDKWQVIHSFEDSIPTDDKNLIVSTACKVCPSLSPHIIEVTSNIPLTRGLGSSASAIVAGIELANQLGKLNLTTDQKVQIATNFEGHPDNVAASILGGTVIGALDGKNVSVVRIESKELGVISLIPNEELNTDESRSVLPDVFPFHEAVKASAISNVLVAALCQKKWEVVGEMMEMDHFHEPYRLELVPLLPSIRKCAKEFGAYGTALSGAGPSIFILTPYEKRQEIAEQLARVFTSMKVCELEIDHRGITVNKKEHIGL.

82–92 (PLTRGLGSSAS) provides a ligand contact to ATP.

This sequence belongs to the GHMP kinase family. Homoserine kinase subfamily.

Its subcellular location is the cytoplasm. The catalysed reaction is L-homoserine + ATP = O-phospho-L-homoserine + ADP + H(+). Its pathway is amino-acid biosynthesis; L-threonine biosynthesis; L-threonine from L-aspartate: step 4/5. Catalyzes the ATP-dependent phosphorylation of L-homoserine to L-homoserine phosphate. The sequence is that of Homoserine kinase from Bacillus thuringiensis (strain Al Hakam).